A 446-amino-acid chain; its full sequence is Cyclin-F2-2 (446 aa).

Positions 191-216 (YNGDNDAPAPDNSTASRPQLCAPYDD) are disordered.

It belongs to the cyclin family. Cyclin F subfamily.

The sequence is that of Cyclin-F2-2 (CYCF2-2) from Oryza sativa subsp. japonica (Rice).